A 272-amino-acid chain; its full sequence is Ras-related protein RSR1 (272 aa).

10–17 contacts GTP; the sequence is GAGGVGKS. An Effector region motif is present at residues 32-40; the sequence is YDPTIEDSY. Residues 57-61 and 116-119 each bind GTP; these read DTAGI and NKAD. A disordered region spans residues 177 to 272; the sequence is DARNQSQQFS…KKNASTCTIL (96 aa). 2 stretches are compositionally biased toward polar residues: residues 180-232 and 245-258; these read NQSQ…STPV and SGSS…ATSQ. Cysteine methyl ester is present on cysteine 269. A lipid anchor (S-geranylgeranyl cysteine) is attached at cysteine 269. Positions 270 to 272 are cleaved as a propeptide — removed in mature form; that stretch reads TIL.

Belongs to the small GTPase superfamily. Ras family.

The protein resides in the cell membrane. The catalysed reaction is GTP + H2O = GDP + phosphate + H(+). Its activity is regulated as follows. Alternates between an inactive form bound to GDP and an active form bound to GTP. Activated by a guanine nucleotide-exchange factor (GEF) and inactivated by a GTPase-activating protein (GAP). Its function is as follows. Ras-related protein which binds GDP/GTP and possesses intrinsic GTPase activity. Involved in development of cell polarity during the cell division cycle, and essential for bud emergence. In Saccharomyces cerevisiae (strain ATCC 204508 / S288c) (Baker's yeast), this protein is Ras-related protein RSR1.